Reading from the N-terminus, the 643-residue chain is Nicastrin (643 aa).

The N-terminal stretch at 1 to 20 is a signal peptide; sequence MRFKNVLVLLLLLVFSVINS. At 21 to 611 the chain is on the extracellular side; sequence EPSAPATISD…VFKIGNSTTE (591 aa). Cys-42 and Cys-54 form a disulfide bridge. 2 N-linked (GlcNAc...) asparagine glycosylation sites follow: Asn-96 and Asn-166. Intrachain disulfides connect Cys-204–Cys-210 and Cys-308–Cys-318. N-linked (GlcNAc...) asparagine glycosylation is found at Asn-333 and Asn-385. Cystine bridges form between Cys-479–Cys-486, Cys-540–Cys-551, and Cys-546–Cys-556. Residue Asn-584 is glycosylated (N-linked (GlcNAc...) asparagine). Residues 612–632 form a helical membrane-spanning segment; sequence IWFLVSGLIELLVSIGLILYV. Residues 633–643 lie on the Cytoplasmic side of the membrane; that stretch reads KKFLSNRYKLL.

This sequence belongs to the nicastrin family. As to quaternary structure, component of the gamma-secretase complex, a complex composed of a presenilin homodimer, nicastrin, aph1 and pen2.

It localises to the membrane. In terms of biological role, essential subunit of the gamma-secretase complex, an endoprotease complex that catalyzes the intramembrane cleavage of integral membrane proteins such as Notch receptors and APP (amyloid-beta precursor protein). This is Nicastrin from Dictyostelium purpureum (Slime mold).